The following is a 37-amino-acid chain: Large ribosomal subunit protein bL36 (37 aa).

The protein belongs to the bacterial ribosomal protein bL36 family.

This Pelotomaculum thermopropionicum (strain DSM 13744 / JCM 10971 / SI) protein is Large ribosomal subunit protein bL36.